Here is a 140-residue protein sequence, read N- to C-terminus: Nuclear receptor 2C2-associated protein (140 aa).

Belongs to the NR2C2AP family. In terms of assembly, interacts with NR2C2/TR4.

It localises to the nucleus. Its function is as follows. May act as a repressor of NR2C2-mediated transactivation by suppressing the binding between NR2C2/TR4 and the TR4-response element in target genes. The protein is Nuclear receptor 2C2-associated protein (Nr2c2ap) of Mus musculus (Mouse).